Here is a 262-residue protein sequence, read N- to C-terminus: Ribosomal RNA small subunit methyltransferase A (262 aa).

6 residues coordinate S-adenosyl-L-methionine: H19, L21, G44, E65, D90, and N109. Residues 218–246 (LPNNLPGPLRERAEEALAGLGHGPDARAE) form a disordered region.

The protein belongs to the class I-like SAM-binding methyltransferase superfamily. rRNA adenine N(6)-methyltransferase family. RsmA subfamily.

The protein resides in the cytoplasm. It catalyses the reaction adenosine(1518)/adenosine(1519) in 16S rRNA + 4 S-adenosyl-L-methionine = N(6)-dimethyladenosine(1518)/N(6)-dimethyladenosine(1519) in 16S rRNA + 4 S-adenosyl-L-homocysteine + 4 H(+). Functionally, specifically dimethylates two adjacent adenosines (A1518 and A1519) in the loop of a conserved hairpin near the 3'-end of 16S rRNA in the 30S particle. May play a critical role in biogenesis of 30S subunits. The chain is Ribosomal RNA small subunit methyltransferase A from Rubrobacter xylanophilus (strain DSM 9941 / JCM 11954 / NBRC 16129 / PRD-1).